A 377-amino-acid polypeptide reads, in one-letter code: Pseudouridylate synthase RPUSD4, mitochondrial (377 aa).

The transit peptide at 1–46 (MAAPCLRTPGVQLLSMSSRPGRLFTPGSWSFCSSATSSRPLNAQRL) directs the protein to the mitochondrion. Residue aspartate 153 is part of the active site.

Belongs to the pseudouridine synthase RluA family. As to quaternary structure, interacts with 16S mt-rRNA, mt-tRNA(Phe) and mt-tRNA(Met). Forms a regulatory protein-RNA complex, consisting of RCC1L, NGRN, RPUSD3, RPUSD4, TRUB2, FASTKD2 and 16S mt-rRNA.

Its subcellular location is the mitochondrion matrix. The protein localises to the nucleus. It localises to the cytoplasm. The catalysed reaction is uridine in 5S rRNA = pseudouridine in 5S rRNA. It carries out the reaction a uridine in tRNA = a pseudouridine in tRNA. The enzyme catalyses a uridine in mRNA = a pseudouridine in mRNA. Functionally, catalyzes uridine to pseudouridine isomerization (pseudouridylation) of different mitochondrial RNA substrates. Acts on position 1397 in 16S mitochondrial ribosomal RNA (16S mt-rRNA). This modification is required for the assembly of 16S mt-rRNA into a functional mitochondrial ribosome. As a component of a functional protein-RNA module, consisting of RCC1L, NGRN, RPUSD3, RPUSD4, TRUB2, FASTKD2 and 16S mt-rRNA, controls 16S mt-rRNA abundance and is required for intra-mitochondrial translation. Acts on position 39 in mitochondrial tRNA(Phe). Also catalyzes pseudouridylation of mRNAs in nucleus: acts as a regulator of pre-mRNA splicing by mediating pseudouridylation of pre-mRNAs at locations associated with alternatively spliced regions. Pseudouridylation of pre-mRNAs near splice sites directly regulates mRNA splicing and mRNA 3'-end processing. This Mus musculus (Mouse) protein is Pseudouridylate synthase RPUSD4, mitochondrial.